We begin with the raw amino-acid sequence, 398 residues long: Lysophosphatidylserine lipase ABHD12 (398 aa).

Residues 1 to 74 (MRKRTEPVAL…RKGLWLRLRK (74 aa)) lie on the Cytoplasmic side of the membrane. A helical transmembrane segment spans residues 75 to 95 (ILFCVLGLYIAIPFLIKLCPG). Over 96–398 (IQAKLIFLNF…LGKSEPEHQH (303 aa)) the chain is Extracellular. Asparagine 123 is a glycosylation site (N-linked (GlcNAc...) asparagine). Serine 246 serves as the catalytic Nucleophile. Active-site charge relay system residues include aspartate 333 and histidine 372.

The protein belongs to the serine esterase family.

It localises to the endoplasmic reticulum membrane. It carries out the reaction 1-(9Z-octadecenoyl)-sn-glycero-3-phospho-L-serine + H2O = sn-glycero-3-phospho-L-serine + (9Z)-octadecenoate + H(+). The catalysed reaction is 1-(9Z-octadecenoyl)-sn-glycero-3-phospho-(1'-sn-glycerol) + H2O = sn-glycero-3-phospho-(1'-sn-glycerol) + (9Z)-octadecenoate + H(+). It catalyses the reaction 1-(9Z-octadecenoyl)-sn-glycero-3-phospho-(1D-myo-inositol) + H2O = sn-glycero-3-phospho-1D-myo-inositol + (9Z)-octadecenoate + H(+). The enzyme catalyses 1-(9Z-octadecenoyl)-sn-glycero-3-phosphoethanolamine + H2O = sn-glycero-3-phosphoethanolamine + (9Z)-octadecenoate + H(+). It carries out the reaction 1-(9Z-octadecenoyl)-sn-glycero-3-phosphocholine + H2O = 1-(9Z-octadecenoyl)-sn-glycerol + phosphocholine + H(+). The catalysed reaction is 2-(9Z-octadecenoyl)-glycerol + H2O = glycerol + (9Z)-octadecenoate + H(+). It catalyses the reaction 1-hexadecanoyl-sn-glycero-3-phospho-L-serine + H2O = sn-glycero-3-phospho-L-serine + hexadecanoate + H(+). The enzyme catalyses 2-(5Z,8Z,11Z,14Z-eicosatetraenoyl)-glycerol + H2O = glycerol + (5Z,8Z,11Z,14Z)-eicosatetraenoate + H(+). It carries out the reaction Hydrolyzes glycerol monoesters of long-chain fatty acids.. The catalysed reaction is 1-decanoylglycerol + H2O = decanoate + glycerol + H(+). It catalyses the reaction 1-dodecanoylglycerol + H2O = dodecanoate + glycerol + H(+). The enzyme catalyses 1-tetradecanoylglycerol + H2O = tetradecanoate + glycerol + H(+). It carries out the reaction 2-hexadecanoylglycerol + H2O = glycerol + hexadecanoate + H(+). The catalysed reaction is 1-(9Z-octadecenoyl)-glycerol + H2O = glycerol + (9Z)-octadecenoate + H(+). It catalyses the reaction 2-(9Z,12Z-octadecadienoyl)-glycerol + H2O = (9Z,12Z)-octadecadienoate + glycerol + H(+). The enzyme catalyses 1-(5Z,8Z,11Z,14Z-eicosatetraenoyl)-glycerol + H2O = glycerol + (5Z,8Z,11Z,14Z)-eicosatetraenoate + H(+). It carries out the reaction 1-(9Z,12Z-octadecadienoyl)-glycerol + H2O = (9Z,12Z)-octadecadienoate + glycerol + H(+). The catalysed reaction is 1-hexadecanoylglycerol + H2O = glycerol + hexadecanoate + H(+). It catalyses the reaction 1-octadecanoylglycerol + H2O = octadecanoate + glycerol + H(+). The enzyme catalyses 1-octadecanoyl-2-(9,10-epoxyoctadecanoyl)-sn-glycero-3-phospho-L-serine + H2O = 9,10-epoxyoctadecanoate + 1-octadecanoyl-sn-glycero-3-phosphoserine + H(+). It carries out the reaction 1-octadecanoyl-2-(10-hydroxyoctadecanoyl)-sn-glycero-3-phospho-L-serine + H2O = 1-octadecanoyl-sn-glycero-3-phosphoserine + 10-hydroxyoctadecanoate + H(+). The catalysed reaction is 1-hexadecanoyl-2-(10-hydroxyoctadecanoyl)-sn-glycero-3-phospho-L-serine + H2O = 10-hydroxyoctadecanoate + 1-hexadecanoyl-sn-glycero-3-phospho-L-serine + H(+). In terms of biological role, lysophosphatidylserine (LPS) lipase that mediates the hydrolysis of lysophosphatidylserine, a class of signaling lipids that regulates immunological and neurological processes. Represents a major lysophosphatidylserine lipase in the brain, thereby playing a key role in the central nervous system. Also able to hydrolyze oxidized phosphatidylserine; oxidized phosphatidylserine is produced in response to severe inflammatory stress and constitutes a proapoptotic 'eat me' signal. Also has monoacylglycerol (MAG) lipase activity: hydrolyzes 2-arachidonoylglycerol (2-AG), thereby acting as a regulator of endocannabinoid signaling pathways. Has a strong preference for very-long-chain lipid substrates; substrate specificity is likely due to improved catalysis and not improved substrate binding. The protein is Lysophosphatidylserine lipase ABHD12 of Macaca fascicularis (Crab-eating macaque).